The chain runs to 119 residues: MAFKDTGKTPVEPEVAIHRIRITLTSRNVKSLEKVCADLIRGAKEKNLKVKGPVRMPTKTLRITTGKTPCGEGSKTWDRFQMRIHKRLIDLHSPSEIVKQITSISIEPGVEVEVTIADA.

Ala-2 is subject to N-acetylalanine. A Glycyl lysine isopeptide (Lys-Gly) (interchain with G-Cter in ubiquitin) cross-link involves residue Lys-4. Lys-8 carries the post-translational modification N6-succinyllysine; alternate. A Glycyl lysine isopeptide (Lys-Gly) (interchain with G-Cter in ubiquitin); alternate cross-link involves residue Lys-8. Position 9 is a phosphothreonine (Thr-9). An N6-acetyllysine mark is found at Lys-34 and Lys-75. A Phosphoserine modification is found at Ser-93.

It belongs to the universal ribosomal protein uS10 family. Component of the 40S small ribosomal subunit. Post-translationally, polyubiquitinated by ZNF598 via 'Lys-63'-linked ubiquitin chains when a ribosome has stalled, initiating the ribosome quality control (RQC) pathway to degrade the potentially detrimental aberrant nascent polypeptide. Deubiquitinated by OTUD3 and USP21, antagonizing ZNF598 activity. In terms of processing, ufmylated by UFL1.

It is found in the cytoplasm. In terms of biological role, component of the small ribosomal subunit. The ribosome is a large ribonucleoprotein complex responsible for the synthesis of proteins in the cell. This chain is Small ribosomal subunit protein uS10 (RPS20), found in Pongo abelii (Sumatran orangutan).